A 173-amino-acid chain; its full sequence is Myosin light chain 5 (173 aa).

The tract at residues 1–20 (MASRKTKKKEGGALRAQRAS) is disordered. 3 consecutive EF-hand domains span residues 30 to 65 (TQIQ…LGKT), 100 to 135 (DAEE…QADK), and 136 to 171 (MTAE…GEEK). Ca(2+)-binding residues include Asp43, Asn45, Asp47, and Asp54.

In terms of assembly, myosin is a hexamer of 2 heavy chains and 4 light chains. Expressed in fetal skeletal muscle and retina.

The chain is Myosin light chain 5 (MYL5) from Homo sapiens (Human).